The primary structure comprises 268 residues: uncharacterized protein (268 aa).

This sequence belongs to the LarE family.

This is an uncharacterized protein from Synechocystis sp. (strain ATCC 27184 / PCC 6803 / Kazusa).